The sequence spans 169 residues: Crossover junction endodeoxyribonuclease RuvC (169 aa).

Catalysis depends on residues D11, E71, and D143. D11, E71, and D143 together coordinate Mg(2+).

It belongs to the RuvC family. As to quaternary structure, homodimer which binds Holliday junction (HJ) DNA. The HJ becomes 2-fold symmetrical on binding to RuvC with unstacked arms; it has a different conformation from HJ DNA in complex with RuvA. In the full resolvosome a probable DNA-RuvA(4)-RuvB(12)-RuvC(2) complex forms which resolves the HJ. Requires Mg(2+) as cofactor.

It localises to the cytoplasm. The enzyme catalyses Endonucleolytic cleavage at a junction such as a reciprocal single-stranded crossover between two homologous DNA duplexes (Holliday junction).. Its function is as follows. The RuvA-RuvB-RuvC complex processes Holliday junction (HJ) DNA during genetic recombination and DNA repair. Endonuclease that resolves HJ intermediates. Cleaves cruciform DNA by making single-stranded nicks across the HJ at symmetrical positions within the homologous arms, yielding a 5'-phosphate and a 3'-hydroxyl group; requires a central core of homology in the junction. The consensus cleavage sequence is 5'-(A/T)TT(C/G)-3'. Cleavage occurs on the 3'-side of the TT dinucleotide at the point of strand exchange. HJ branch migration catalyzed by RuvA-RuvB allows RuvC to scan DNA until it finds its consensus sequence, where it cleaves and resolves the cruciform DNA. This Allorhizobium ampelinum (strain ATCC BAA-846 / DSM 112012 / S4) (Agrobacterium vitis (strain S4)) protein is Crossover junction endodeoxyribonuclease RuvC.